We begin with the raw amino-acid sequence, 318 residues long: Putative enoyl-CoA hydratase EchA13 (318 aa).

Residues 90-110 form a disordered region; the sequence is LGSADDIRERSPGPDQHPSYR.

This sequence belongs to the enoyl-CoA hydratase/isomerase family.

The chain is Putative enoyl-CoA hydratase EchA13 (echA13) from Mycobacterium tuberculosis (strain ATCC 25618 / H37Rv).